Here is a 293-residue protein sequence, read N- to C-terminus: Ribosomal protein L11 methyltransferase (293 aa).

Residues T145, G166, D188, and N230 each coordinate S-adenosyl-L-methionine.

It belongs to the methyltransferase superfamily. PrmA family.

It is found in the cytoplasm. The enzyme catalyses L-lysyl-[protein] + 3 S-adenosyl-L-methionine = N(6),N(6),N(6)-trimethyl-L-lysyl-[protein] + 3 S-adenosyl-L-homocysteine + 3 H(+). Its function is as follows. Methylates ribosomal protein L11. In Haemophilus ducreyi (strain 35000HP / ATCC 700724), this protein is Ribosomal protein L11 methyltransferase.